The primary structure comprises 347 residues: S-adenosylmethionine:tRNA ribosyltransferase-isomerase (347 aa).

This sequence belongs to the QueA family. In terms of assembly, monomer.

It is found in the cytoplasm. It carries out the reaction 7-aminomethyl-7-carbaguanosine(34) in tRNA + S-adenosyl-L-methionine = epoxyqueuosine(34) in tRNA + adenine + L-methionine + 2 H(+). The protein operates within tRNA modification; tRNA-queuosine biosynthesis. In terms of biological role, transfers and isomerizes the ribose moiety from AdoMet to the 7-aminomethyl group of 7-deazaguanine (preQ1-tRNA) to give epoxyqueuosine (oQ-tRNA). This chain is S-adenosylmethionine:tRNA ribosyltransferase-isomerase, found in Xylella fastidiosa (strain M12).